We begin with the raw amino-acid sequence, 327 residues long: tRNA uridine(34) hydroxylase (327 aa).

The region spanning 123-217 (SDPEVLVVDT…YLEEVPQEQS (95 aa)) is the Rhodanese domain. C177 serves as the catalytic Cysteine persulfide intermediate.

This sequence belongs to the TrhO family.

The catalysed reaction is uridine(34) in tRNA + AH2 + O2 = 5-hydroxyuridine(34) in tRNA + A + H2O. Functionally, catalyzes oxygen-dependent 5-hydroxyuridine (ho5U) modification at position 34 in tRNAs. The protein is tRNA uridine(34) hydroxylase of Vibrio cholerae serotype O1 (strain ATCC 39315 / El Tor Inaba N16961).